A 133-amino-acid chain; its full sequence is Napin-1 (133 aa).

2 consecutive propeptides follow at residues 31–49 and 131–133; these read PSWT…EKQG and PSY.

It belongs to the 2S seed storage albumins family. As to quaternary structure, the mature protein consists of a small and a large chain linked by disulfide bonds. Cotyledons and the axis.

In terms of biological role, the small, basic, water-soluble napins are one of the two major kinds of storage proteins synthesized in the seed during its maturation. This is Napin-1 from Brassica napus (Rape).